We begin with the raw amino-acid sequence, 499 residues long: 2-isopropylmalate synthase (499 aa).

Residues 5-267 (IKIFDTTLRD…ETGINLGEIA (263 aa)) form the Pyruvate carboxyltransferase domain. The Mn(2+) site is built by aspartate 14, histidine 202, histidine 204, and asparagine 238. Residues 391–499 (SVEVLHVISG…YLSALNRIRR (109 aa)) form a regulatory domain region.

Belongs to the alpha-IPM synthase/homocitrate synthase family. LeuA type 1 subfamily. Requires Mn(2+) as cofactor.

Its subcellular location is the cytoplasm. It catalyses the reaction 3-methyl-2-oxobutanoate + acetyl-CoA + H2O = (2S)-2-isopropylmalate + CoA + H(+). It participates in amino-acid biosynthesis; L-leucine biosynthesis; L-leucine from 3-methyl-2-oxobutanoate: step 1/4. Functionally, catalyzes the condensation of the acetyl group of acetyl-CoA with 3-methyl-2-oxobutanoate (2-ketoisovalerate) to form 3-carboxy-3-hydroxy-4-methylpentanoate (2-isopropylmalate). The polypeptide is 2-isopropylmalate synthase (Pyrococcus furiosus (strain ATCC 43587 / DSM 3638 / JCM 8422 / Vc1)).